The sequence spans 94 residues: Protein S100-A1 (94 aa).

2 consecutive EF-hand domains span residues 13-48 (INVF…FLDA) and 50-85 (KDVD…LTVA). Residues Lys28, Glu33, Asp63, Asn65, Asp67, Glu69, and Glu74 each coordinate Ca(2+). Cys86 is modified (S-nitrosocysteine).

The protein belongs to the S-100 family. Dimer of either two alpha chains, or two beta chains, or one alpha and one beta chain. Also forms heterodimers with S100P. Interacts with AGER. Interacts with CAPZA1. Interacts with FKBP4. Interacts with RYR1 and RYR2. Interacts with CACYBP in a calcium-dependent manner. Interacts with PPP5C (via TPR repeats); the interaction is calcium-dependent and modulates PPP5C activity. Interacts with ATP2A2 and PLN in a Ca(2+)-dependent manner. Interacts with mitochondrial F1-ATPase subunits ATP5F1A and ATP5F1B; these interactions increase F1-ATPase activity. In terms of processing, glutathionylated; glutathionylation increases affinity to calcium about 10-fold. As to expression, highly prevalent in heart. Also found in lesser quantities in skeletal muscle and brain.

The protein resides in the cytoplasm. It is found in the sarcoplasmic reticulum. It localises to the mitochondrion. Its function is as follows. Small calcium binding protein that plays important roles in several biological processes such as Ca(2+) homeostasis, chondrocyte biology and cardiomyocyte regulation. In response to an increase in intracellular Ca(2+) levels, binds calcium which triggers conformational changes. These changes allow interactions with specific target proteins and modulate their activity. Regulates a network in cardiomyocytes controlling sarcoplasmic reticulum Ca(2+) cycling and mitochondrial function through interaction with the ryanodine receptors RYR1 and RYR2, sarcoplasmic reticulum Ca(2+)-ATPase/ATP2A2 and mitochondrial F1-ATPase. Facilitates diastolic Ca(2+) dissociation and myofilament mechanics in order to improve relaxation during diastole. The sequence is that of Protein S100-A1 (S100A1) from Homo sapiens (Human).